Here is a 74-residue protein sequence, read N- to C-terminus: Exodeoxyribonuclease 7 small subunit (74 aa).

Belongs to the XseB family. Heterooligomer composed of large and small subunits.

It localises to the cytoplasm. It catalyses the reaction Exonucleolytic cleavage in either 5'- to 3'- or 3'- to 5'-direction to yield nucleoside 5'-phosphates.. Its function is as follows. Bidirectionally degrades single-stranded DNA into large acid-insoluble oligonucleotides, which are then degraded further into small acid-soluble oligonucleotides. The sequence is that of Exodeoxyribonuclease 7 small subunit from Neisseria gonorrhoeae (strain ATCC 700825 / FA 1090).